Here is a 123-residue protein sequence, read N- to C-terminus: Large ribosomal subunit protein bL12 (123 aa).

Belongs to the bacterial ribosomal protein bL12 family. In terms of assembly, homodimer. Part of the ribosomal stalk of the 50S ribosomal subunit. Forms a multimeric L10(L12)X complex, where L10 forms an elongated spine to which 2 to 4 L12 dimers bind in a sequential fashion. Binds GTP-bound translation factors.

In terms of biological role, forms part of the ribosomal stalk which helps the ribosome interact with GTP-bound translation factors. Is thus essential for accurate translation. The chain is Large ribosomal subunit protein bL12 from Bartonella bacilliformis (strain ATCC 35685 / KC583 / Herrer 020/F12,63).